A 305-amino-acid polypeptide reads, in one-letter code: UDP-3-O-acyl-N-acetylglucosamine deacetylase (305 aa).

Zn(2+) contacts are provided by H77, H234, and D238. The active-site Proton donor is H261.

Belongs to the LpxC family. Requires Zn(2+) as cofactor.

It carries out the reaction a UDP-3-O-[(3R)-3-hydroxyacyl]-N-acetyl-alpha-D-glucosamine + H2O = a UDP-3-O-[(3R)-3-hydroxyacyl]-alpha-D-glucosamine + acetate. The protein operates within glycolipid biosynthesis; lipid IV(A) biosynthesis; lipid IV(A) from (3R)-3-hydroxytetradecanoyl-[acyl-carrier-protein] and UDP-N-acetyl-alpha-D-glucosamine: step 2/6. Its function is as follows. Catalyzes the hydrolysis of UDP-3-O-myristoyl-N-acetylglucosamine to form UDP-3-O-myristoylglucosamine and acetate, the committed step in lipid A biosynthesis. The chain is UDP-3-O-acyl-N-acetylglucosamine deacetylase from Oleidesulfovibrio alaskensis (strain ATCC BAA-1058 / DSM 17464 / G20) (Desulfovibrio alaskensis).